A 436-amino-acid polypeptide reads, in one-letter code: Sarcosine reductase complex component B subunit beta (436 aa).

The active site involves Sec350. Position 350 (Sec350) is a non-standard amino acid, selenocysteine.

This sequence belongs to the GrdB/GrdF/GrdH family. In terms of assembly, heterotetramer of two alpha and two beta subunits. Component of the sarcosine reductase complex, together with components A and C. PB is substrate specific.

The enzyme catalyses acetyl phosphate + methylamine + [thioredoxin]-disulfide + H2O = sarcosine + [thioredoxin]-dithiol + phosphate + H(+). Its function is as follows. In the first step of sarcosine reductase, the substrate is bound to component PB via a Schiff base intermediate. Then the PB-activated substrate is nucleophilically attacked by the selenol anion of component PA to transform it to a carboxymethylated selenoether and the respective amine. By action of component PC, acetyl phosphate is formed, leaving component PA in its oxidized state. Finally component PA becomes reduced by the thioredoxin system to start a new catalytic cycle of reductive deamination. This Peptoclostridium acidaminophilum (Eubacterium acidaminophilum) protein is Sarcosine reductase complex component B subunit beta (grdF).